A 338-amino-acid chain; its full sequence is Dihydroorotate dehydrogenase (quinone) (338 aa).

FMN-binding positions include 59 to 63 (AGLDK) and Thr-83. Position 63 (Lys-63) interacts with substrate. 108–112 (NRMGF) is a binding site for substrate. Residues Asn-136 and Asn-169 each coordinate FMN. Substrate is bound at residue Asn-169. Ser-172 acts as the Nucleophile in catalysis. A substrate-binding site is contributed by Asn-174. FMN-binding residues include Lys-214 and Thr-242. A substrate-binding site is contributed by 243–244 (NT). FMN-binding positions include Gly-265, Gly-294, and 315–316 (YS).

This sequence belongs to the dihydroorotate dehydrogenase family. Type 2 subfamily. As to quaternary structure, monomer. The cofactor is FMN.

Its subcellular location is the cell membrane. It catalyses the reaction (S)-dihydroorotate + a quinone = orotate + a quinol. It participates in pyrimidine metabolism; UMP biosynthesis via de novo pathway; orotate from (S)-dihydroorotate (quinone route): step 1/1. Catalyzes the conversion of dihydroorotate to orotate with quinone as electron acceptor. In Azoarcus sp. (strain BH72), this protein is Dihydroorotate dehydrogenase (quinone).